The sequence spans 294 residues: NAD kinase (294 aa).

Asp74 acts as the Proton acceptor in catalysis. NAD(+) contacts are provided by residues Asp74–Gly75, Asn148–Glu149, His159, Arg176, Asp178, Thr189–Ser194, and Gln249.

The protein belongs to the NAD kinase family. It depends on a divalent metal cation as a cofactor.

The protein resides in the cytoplasm. It carries out the reaction NAD(+) + ATP = ADP + NADP(+) + H(+). In terms of biological role, involved in the regulation of the intracellular balance of NAD and NADP, and is a key enzyme in the biosynthesis of NADP. Catalyzes specifically the phosphorylation on 2'-hydroxyl of the adenosine moiety of NAD to yield NADP. The protein is NAD kinase of Vibrio campbellii (strain ATCC BAA-1116).